The following is a 206-amino-acid chain: Large ribosomal subunit protein eL13x (206 aa).

The disordered stretch occupies residues asparagine 186 to lysine 206. Residues arginine 196–lysine 206 are compositionally biased toward basic and acidic residues.

Belongs to the eukaryotic ribosomal protein eL13 family.

In Arabidopsis thaliana (Mouse-ear cress), this protein is Large ribosomal subunit protein eL13x (RPL13D).